A 272-amino-acid chain; its full sequence is Dermonecrotic toxin LspaSicTox-alphaII1 (272 aa).

Residue His5 is part of the active site. Residues Glu25 and Asp27 each contribute to the Mg(2+) site. His41 serves as the catalytic Nucleophile. 2 disulfides stabilise this stretch: Cys45-Cys51 and Cys47-Cys190. Asp85 lines the Mg(2+) pocket.

Belongs to the arthropod phospholipase D family. Class II subfamily. It depends on Mg(2+) as a cofactor. As to expression, expressed by the venom gland.

It localises to the secreted. The enzyme catalyses an N-(acyl)-sphingosylphosphocholine = an N-(acyl)-sphingosyl-1,3-cyclic phosphate + choline. It catalyses the reaction an N-(acyl)-sphingosylphosphoethanolamine = an N-(acyl)-sphingosyl-1,3-cyclic phosphate + ethanolamine. The catalysed reaction is a 1-acyl-sn-glycero-3-phosphocholine = a 1-acyl-sn-glycero-2,3-cyclic phosphate + choline. It carries out the reaction a 1-acyl-sn-glycero-3-phosphoethanolamine = a 1-acyl-sn-glycero-2,3-cyclic phosphate + ethanolamine. Its function is as follows. Dermonecrotic toxins cleave the phosphodiester linkage between the phosphate and headgroup of certain phospholipids (sphingolipid and lysolipid substrates), forming an alcohol (often choline) and a cyclic phosphate. This toxin acts on sphingomyelin (SM). It may also act on ceramide phosphoethanolamine (CPE), lysophosphatidylcholine (LPC) and lysophosphatidylethanolamine (LPE), but not on lysophosphatidylserine (LPS), and lysophosphatidylglycerol (LPG). It acts by transphosphatidylation, releasing exclusively cyclic phosphate products as second products. Induces dermonecrosis, hemolysis, increased vascular permeability, edema, inflammatory response, and platelet aggregation. This chain is Dermonecrotic toxin LspaSicTox-alphaII1, found in Loxosceles spadicea (Recluse spider).